Reading from the N-terminus, the 958-residue chain is Transcription factor PfmaH (958 aa).

The zn(2)-C6 fungal-type DNA-binding region spans 44 to 70 (CLNCSQAKTGCNKEVPCQRCQDKGLHC). A disordered region spans residues 272–301 (EFAGSPSGVSPFGDLSTSNSEPSSSSWGSS). The segment covering 287–301 (STSNSEPSSSSWGSS) has biased composition (low complexity).

It is found in the nucleus. Functionally, transcription factor; part of the gene cluster that mediates the biosynthesis of dihydroxynaphthalene (DHN)-melanin, a bluish-green pigment forming a dark layer in the conidial wall that protects the conidia from UV radiations. The 2 transcription factors present in the cluster, PfmaF and PfmaH, coordinately regulate DHN-melanin production. PfmaH acts as a pathway specific regulator to mediate the expression of Pfma cluster genes including PfmaJ, leading to DHN-melanin production in conidia, and regulates the conidial formation. The polypeptide is Transcription factor PfmaH (PfmaH) (Pestalotiopsis fici (strain W106-1 / CGMCC3.15140)).